The chain runs to 255 residues: MAVISMKQLLEAGVHFGHQTRRWNPKMKKYIFTERNGIYIIDLQKTVRKVDEAYNFLKQVSEDGGQVLFVGTKKQAQESVKSEAERAGQFYINQRWLGGLLTNYKTISKRIKRISEIEKMEEDGLFEVLPKKEVVELKKEYDRLIKFLGGIRDMKSMPQALFVVDPRKERNAIAEARKLNIPIVGIVDTNCDPDEIDYVIPANDDAIRAVKLLTAKMADAILEGQQGVSNEEVAAEQNIDLDEKEKSEETEATEE.

The segment at 226 to 255 (QGVSNEEVAAEQNIDLDEKEKSEETEATEE) is disordered.

Belongs to the universal ribosomal protein uS2 family.

The polypeptide is Small ribosomal subunit protein uS2 (Staphylococcus aureus (strain JH1)).